Here is a 194-residue protein sequence, read N- to C-terminus: WASH complex subunit 3 (194 aa).

Met-1 is modified (N-acetylmethionine). A coiled-coil region spans residues 46-74 (TVCEEKLADLSLRIQQIETTLNILDAKLS). Disordered regions lie at residues 93–121 (SVTN…QESE) and 159–194 (EGLD…SFSD). Over residues 103–121 (TSEQPQQNSTQDSGLQESE) the composition is skewed to polar residues.

This sequence belongs to the CCDC53 family. Component of the WASH core complex also described as WASH regulatory complex (SHRC) composed of WASH (WASHC1, WASH2P or WASH3P), WASHC2 (WASHC2A or WASHC2C), WASHC3, WASHC4 and WASHC5. The WASH core complex associates via WASHC2 with the F-actin-capping protein dimer (formed by CAPZA1, CAPZA2 or CAPZA3 and CAPZB) in a transient or substoichiometric manner which was initially described as WASH complex.

It is found in the early endosome. Its function is as follows. Acts as a component of the WASH core complex that functions as a nucleation-promoting factor (NPF) at the surface of endosomes, where it recruits and activates the Arp2/3 complex to induce actin polymerization, playing a key role in the fission of tubules that serve as transport intermediates during endosome sorting. The polypeptide is WASH complex subunit 3 (Homo sapiens (Human)).